The sequence spans 142 residues: Large ribosomal subunit protein uL11 (142 aa).

N,N,N-trimethylalanine is present on Ala2. N6,N6,N6-trimethyllysine occurs at positions 4 and 40.

This sequence belongs to the universal ribosomal protein uL11 family. As to quaternary structure, part of the ribosomal stalk of the 50S ribosomal subunit. Interacts with L10 and the large rRNA to form the base of the stalk. L10 forms an elongated spine to which L12 dimers bind in a sequential fashion forming a multimeric L10(L12)X complex. One or more lysine residues are methylated.

In terms of biological role, forms part of the ribosomal stalk which helps the ribosome interact with GTP-bound translation factors. This chain is Large ribosomal subunit protein uL11, found in Shigella flexneri.